The chain runs to 337 residues: Fructose-1,6-bisphosphatase class 1 (337 aa).

Residues glutamate 89, aspartate 112, leucine 114, and aspartate 115 each coordinate Mg(2+). Substrate-binding positions include 115–118 (DGSS), asparagine 208, tyrosine 241, and lysine 271. Glutamate 277 provides a ligand contact to Mg(2+).

This sequence belongs to the FBPase class 1 family. As to quaternary structure, homotetramer. It depends on Mg(2+) as a cofactor.

The protein localises to the cytoplasm. It catalyses the reaction beta-D-fructose 1,6-bisphosphate + H2O = beta-D-fructose 6-phosphate + phosphate. Its pathway is carbohydrate biosynthesis; gluconeogenesis. In Yersinia enterocolitica serotype O:8 / biotype 1B (strain NCTC 13174 / 8081), this protein is Fructose-1,6-bisphosphatase class 1.